Consider the following 181-residue polypeptide: 30 kDa heat shock protein (181 aa).

Positions 33 to 181 constitute a sHSP domain; the sequence is ASVQSFAPRF…PPTAKKITIQ (149 aa). Over residues 79–115 the composition is skewed to basic and acidic residues; the sequence is GRSEREYHSSSDDNKNDQADTENQARGESSEVAKTGE. A disordered region spans residues 79–127; sequence GRSEREYHSSSDDNKNDQADTENQARGESSEVAKTGEKQVSTKKAANKS.

Belongs to the small heat shock protein (HSP20) family.

This Emericella nidulans (strain FGSC A4 / ATCC 38163 / CBS 112.46 / NRRL 194 / M139) (Aspergillus nidulans) protein is 30 kDa heat shock protein (hsp30).